We begin with the raw amino-acid sequence, 151 residues long: Lectin-like protein BA14k (151 aa).

An N-terminal signal peptide occupies residues 1-26; the sequence is MNIFKQTCVGAFAVIFGATSIAPTMA. The helical transmembrane segment at 83-103 threads the bilayer; sequence GWWYPLAAFGAGAIIGGAVSQ.

Belongs to the BA14k family.

It is found in the cell membrane. Has immunoglobulin-binding and hemagglutination properties, and can bind to mannose. Essential for virulence. May be involved in LPS biosynthesis or polysaccharide transport. This Brucella anthropi (strain ATCC 49188 / DSM 6882 / CCUG 24695 / JCM 21032 / LMG 3331 / NBRC 15819 / NCTC 12168 / Alc 37) (Ochrobactrum anthropi) protein is Lectin-like protein BA14k.